Consider the following 85-residue polypeptide: RNA-binding protein Hfq (85 aa).

In terms of domain architecture, Sm spans 9 to 68 (DPFLNELRKEKVPVSVFLVNGIKLHGIIDSFDQYVVMLKNSITQMVYKHAISTVVPSRMV).

Belongs to the Hfq family. As to quaternary structure, homohexamer.

RNA chaperone that binds small regulatory RNA (sRNAs) and mRNAs to facilitate mRNA translational regulation in response to envelope stress, environmental stress and changes in metabolite concentrations. Also binds with high specificity to tRNAs. The polypeptide is RNA-binding protein Hfq (Legionella pneumophila (strain Paris)).